Here is a 935-residue protein sequence, read N- to C-terminus: Lon protease homolog 2, peroxisomal (935 aa).

In terms of domain architecture, Lon N-terminal spans leucine 12–glycine 296. Residue glycine 452–threonine 459 participates in ATP binding. The Lon proteolytic domain maps to glutamine 692–glycine 922. Catalysis depends on residues serine 789 and lysine 832. The Microbody targeting signal signature appears at alanine 933–isoleucine 935.

This sequence belongs to the peptidase S16 family.

The protein resides in the peroxisome matrix. The enzyme catalyses Hydrolysis of proteins in presence of ATP.. In terms of biological role, ATP-dependent serine protease that mediates the selective degradation of misfolded and unassembled polypeptides in the peroxisomal matrix. Necessary for type 2 peroxisome targeting signal (PTS2)-containing protein processing and facilitates peroxisome matrix protein import. In Pichia angusta (Yeast), this protein is Lon protease homolog 2, peroxisomal (PLN).